A 453-amino-acid polypeptide reads, in one-letter code: Nuclear hormone receptor family member nhr-12 (453 aa).

Residues 1 to 37 are disordered; sequence MEQIPQEQKTEPFLASFTTTEKLGTETPTTSITPNTQ. The segment covering 18–36 has biased composition (low complexity); the sequence is TTTEKLGTETPTTSITPNT. The nuclear receptor DNA-binding region spans 44–119; the sequence is KPNCAVCNEV…VGMNPECVQN (76 aa). 2 consecutive NR C4-type zinc fingers follow at residues 47–67 and 83–107; these read CAVCNEVGDGLHFGAEACRAC and CRAGRNCEVSSNIRCMCRSCRYDKC. One can recognise an NR LBD domain in the interval 178–451; that stretch reads FSPASLPGLS…ENFVNIINGK (274 aa).

Belongs to the nuclear hormone receptor family.

It is found in the nucleus. Its function is as follows. Orphan nuclear receptor. This chain is Nuclear hormone receptor family member nhr-12 (nhr-12), found in Caenorhabditis elegans.